A 154-amino-acid polypeptide reads, in one-letter code: Protein X (154 aa).

Positions 68–117 (PCALRFTSARCMETTVNAHQILPKVLYKRTLGLPAMSTTDLEAYFKDCVF) are mitochondrial targeting sequence.

Belongs to the orthohepadnavirus protein X family. As to quaternary structure, may form homodimer. May interact with host CEBPA, CFLAR, CREB1, DDB1, E4F1, HBXIP, HSPD1/HSP60, NFKBIA, POLR2E and SMAD4. Interacts with host SMC5-SMC6 complex and induces its degradation. Interacts with host TRPC4AP; leading to prevent ubiquitination of TRPC4AP. Interacts with host PLSCR1; this interaction promotes ubiquitination and degradation of HBx and impairs HBx-mediated cell proliferation. In terms of processing, a fraction may be phosphorylated in insect cells and HepG2 cells, a human hepatoblastoma cell line. Phosphorylated in vitro by host protein kinase C or mitogen-activated protein kinase. N-acetylated in insect cells.

It is found in the host cytoplasm. The protein localises to the host nucleus. It localises to the host mitochondrion. In terms of biological role, multifunctional protein that plays a role in silencing host antiviral defenses and promoting viral transcription. Does not seem to be essential for HBV infection. May be directly involved in development of cirrhosis and liver cancer (hepatocellular carcinoma). Most of cytosolic activities involve modulation of cytosolic calcium. The effect on apoptosis is controversial depending on the cell types in which the studies have been conducted. May induce apoptosis by localizing in mitochondria and causing loss of mitochondrial membrane potential. May also modulate apoptosis by binding host CFLAR, a key regulator of the death-inducing signaling complex (DISC). Promotes viral transcription by using the host E3 ubiquitin ligase DDB1 to target the SMC5-SMC6 complex to proteasomal degradation. This host complex would otherwise bind to viral episomal DNA, and prevents its transcription. Moderately stimulates transcription of many different viral and cellular transcription elements. Promoters and enhancers stimulated by HBx contain DNA binding sites for NF-kappa-B, AP-1, AP-2, c-EBP, ATF/CREB, or the calcium-activated factor NF-AT. The sequence is that of Protein X from Homo sapiens (Human).